The following is a 926-amino-acid chain: Coatomer subunit beta'-2 (926 aa).

WD repeat units follow at residues 13–52, 55–94, 97–136, 140–180, 183–224, 227–266, 269–309, 351–390, and 461–501; these read QRSE…MAKS, VTEL…KVKV, AHSD…ACTQ, GHSH…PNFT, AHQK…CVQT, GHTH…LENT, YGLE…ASMD, TCDL…RSFG, and RIDV…SHFD. Residues 847–926 are disordered; the sequence is EEESLENGDM…GTNNEGNPSA (80 aa). A compositionally biased stretch (basic and acidic residues) spans 868–887; sequence NEQRNEDDVAEHVEEHHEEK. A compositionally biased stretch (acidic residues) spans 888 to 900; the sequence is EAEEEEGIVDGDS. Over residues 917-926 the composition is skewed to polar residues; sequence GTNNEGNPSA.

This sequence belongs to the WD repeat COPB2 family. In terms of assembly, oligomeric complex that consists of at least the alpha, beta, beta', gamma, delta, epsilon and zeta subunits.

The protein localises to the cytoplasm. It localises to the golgi apparatus membrane. The protein resides in the cytoplasmic vesicle. Its subcellular location is the COPI-coated vesicle membrane. Functionally, the coatomer is a cytosolic protein complex that binds to dilysine motifs and reversibly associates with Golgi non-clathrin-coated vesicles, which further mediate biosynthetic protein transport from the ER, via the Golgi up to the trans Golgi network. Coatomer complex is required for budding from Golgi membranes, and is essential for the retrograde Golgi-to-ER transport of dilysine-tagged proteins. The sequence is that of Coatomer subunit beta'-2 from Arabidopsis thaliana (Mouse-ear cress).